Consider the following 177-residue polypeptide: Chorismate pyruvate-lyase (177 aa).

Substrate-binding residues include M36, R78, L116, and E157.

It belongs to the UbiC family. Monomer.

It is found in the cytoplasm. It carries out the reaction chorismate = 4-hydroxybenzoate + pyruvate. It functions in the pathway cofactor biosynthesis; ubiquinone biosynthesis. In terms of biological role, removes the pyruvyl group from chorismate, with concomitant aromatization of the ring, to provide 4-hydroxybenzoate (4HB) for the ubiquinone pathway. This Pectobacterium carotovorum subsp. carotovorum (strain PC1) protein is Chorismate pyruvate-lyase.